A 194-amino-acid polypeptide reads, in one-letter code: 5'-deoxynucleotidase VV1113 (194 aa).

Substrate contacts are provided by residues 18 to 19 (RW) and His-33. An HD domain is found at 30–142 (VSEHSLQVAF…VKQADSICAY (113 aa)). A divalent metal cation contacts are provided by His-33, His-68, and Asp-69. Residues Asp-69, 77–80 (DLPT), and Asp-137 contribute to the substrate site. Asp-137 provides a ligand contact to a divalent metal cation.

This sequence belongs to the 5DNU family. In terms of assembly, homodimer. It depends on a divalent metal cation as a cofactor.

The protein resides in the cytoplasm. It catalyses the reaction a 2'-deoxyribonucleoside 5'-phosphate + H2O = a 2'-deoxyribonucleoside + phosphate. Catalyzes the strictly specific dephosphorylation of 2'-deoxyribonucleoside 5'-monophosphates. This chain is 5'-deoxynucleotidase VV1113, found in Vibrio vulnificus (strain YJ016).